The primary structure comprises 570 residues: Pantothenate kinase 2, mitochondrial (570 aa).

Residues 1–31 (MRRLGPFHPRVHWAAPPSLSSGLHRLLFLRG) constitute a mitochondrion transit peptide. Disordered stretches follow at residues 34–94 (IPSS…PRAR) and 127–198 (GRLG…SVSR). The short motif at 82-94 (RWRNGRGGRPRAR) is the Nucleolar localization signal element. The span at 84–93 (RNGRGGRPRA) shows a compositional bias: basic residues. Residues 155 to 164 (PEGRRQEPLR) show a composition bias toward basic and acidic residues. Ser-168, Ser-169, and Ser-189 each carry phosphoserine. Over residues 168-179 (SSASVPAVGASA) the composition is skewed to low complexity. Residues 268–275 (LELKDLTL) carry the Nuclear export signal motif. Glu-338 serves as the catalytic Proton acceptor. Acetyl-CoA-binding residues include Ser-392, Ser-395, and Arg-407.

This sequence belongs to the type II pantothenate kinase family. In terms of assembly, homodimer. Post-translationally, synthesized as a 62-kDa precursor which is proteolytically processed by the mitochondrial-processing peptidase (MPP) via a 59-kDa intermediate to yield the mature mitochondrial 48-kDa subunit. Expressed in the brain (at protein level). Ubiquitous. Highly expressed in the testis. Expressed in the umbilical vein endothelial cells (HUVEC).

The protein localises to the mitochondrion. The protein resides in the mitochondrion intermembrane space. It is found in the nucleus. It localises to the cytoplasm. The enzyme catalyses (R)-pantothenate + ATP = (R)-4'-phosphopantothenate + ADP + H(+). It functions in the pathway cofactor biosynthesis; coenzyme A biosynthesis; CoA from (R)-pantothenate: step 1/5. Its activity is regulated as follows. Strongly inhibited by acetyl-CoA and its thioesters. Activated by palmitoylcarnitine. Functionally, mitochondrial isoform that catalyzes the phosphorylation of pantothenate to generate 4'-phosphopantothenate in the first and rate-determining step of coenzyme A (CoA) synthesis. Required for angiogenic activity of umbilical vein of endothelial cells (HUVEC). In terms of biological role, cytoplasmic isoform that catalyzes the phosphorylation of pantothenate to generate 4'-phosphopantothenate in the first and rate-determining step of coenzyme A (CoA) synthesis. In Homo sapiens (Human), this protein is Pantothenate kinase 2, mitochondrial (PANK2).